The sequence spans 178 residues: uncharacterized protein (178 aa).

Positions 9–173 (LTLRKMELED…IDVYMFSLLK (165 aa)) constitute an N-acetyltransferase domain.

This is an uncharacterized protein from Bacillus licheniformis.